The chain runs to 530 residues: Seeligeriolysin (530 aa).

The N-terminal stretch at 1-25 is a signal peptide; that stretch reads MKIFGLVIMSLLFVSLPITQQPEAR. The tract at residues 36–55 is disordered; sequence TISPAETPESPPATPKTPVE. Transmembrane regions (beta stranded) follow at residues 215 to 228, 235 to 244, 313 to 322, and 330 to 342; these read ESQLIAKFGTAFKA, VNFEAISDGK, SNKVKTAFEA, and KGDVELTNIIKNS. The short motif at 484 to 494 is the Conserved undecapeptide element; it reads ECTGLFWEWWR. Positions 516–517 match the Cholesterol binding motif; the sequence is TL.

Belongs to the cholesterol-dependent cytolysin family. Homooligomeric pore complex of 35 to 50 subunits; when inserted in the host membrane.

It is found in the secreted. It localises to the host cell membrane. A cholesterol-dependent toxin that causes cytolysis by forming pores in cholesterol containing host membranes. L.seeligeri is non-pathogenic, perhaps in part because this protein is about 25% as toxic as listeriolysin O. Mutating a single residue in the undecapeptide increases toxicity 2-fold. After binding to target membranes, the protein undergoes a major conformation change, leading to its insertion in the host membrane and formation of an oligomeric pore complex. Cholesterol is required for binding to host membranes, membrane insertion and pore formation; cholesterol binding is mediated by a Thr-Leu pair in the C-terminus. Can be reversibly inactivated by oxidation. This Listeria seeligeri protein is Seeligeriolysin.